Reading from the N-terminus, the 415-residue chain is Palmitoyl-acyl carrier protein thioesterase, chloroplastic (415 aa).

2 stretches are compositionally biased toward low complexity: residues 1-16 (MVAT…LPSA) and 24-41 (KLGN…KSTP). The transit peptide at 1–60 (MVATAASSAFFPLPSADTSSRPGKLGNKPSSLSPLKPKSTPNGGLQVKANASAPPKINGS) directs the protein to the chloroplast. Residues 1 to 81 (MVATAASSAF…QEDAHSAPPP (81 aa)) form a disordered region. Active-site residues include asparagine 314, histidine 316, and cysteine 351.

It belongs to the acyl-ACP thioesterase family.

It localises to the plastid. Its subcellular location is the chloroplast. The enzyme catalyses hexadecanoyl-[ACP] + H2O = hexadecanoate + holo-[ACP] + H(+). Plays an essential role in chain termination during de novo fatty acid synthesis. High thioesterase activity for palmitoyl-ACP versus other acyl-ACPs. The protein is Palmitoyl-acyl carrier protein thioesterase, chloroplastic (FATB1) of Cuphea hookeriana (Cigar plant).